Consider the following 513-residue polypeptide: Bifunctional purine biosynthesis protein PurH (513 aa).

The 144-residue stretch at Met1–Val144 folds into the MGS-like domain.

It belongs to the PurH family.

It carries out the reaction (6R)-10-formyltetrahydrofolate + 5-amino-1-(5-phospho-beta-D-ribosyl)imidazole-4-carboxamide = 5-formamido-1-(5-phospho-D-ribosyl)imidazole-4-carboxamide + (6S)-5,6,7,8-tetrahydrofolate. It catalyses the reaction IMP + H2O = 5-formamido-1-(5-phospho-D-ribosyl)imidazole-4-carboxamide. It participates in purine metabolism; IMP biosynthesis via de novo pathway; 5-formamido-1-(5-phospho-D-ribosyl)imidazole-4-carboxamide from 5-amino-1-(5-phospho-D-ribosyl)imidazole-4-carboxamide (10-formyl THF route): step 1/1. The protein operates within purine metabolism; IMP biosynthesis via de novo pathway; IMP from 5-formamido-1-(5-phospho-D-ribosyl)imidazole-4-carboxamide: step 1/1. The chain is Bifunctional purine biosynthesis protein PurH from Moorella thermoacetica (strain ATCC 39073 / JCM 9320).